Consider the following 1306-residue polypeptide: Receptor-type tyrosine-protein phosphatase C (1306 aa).

Positions 1 to 25 (MTMYLWLKLLAFGFAFLDTEVFVTG) are cleaved as a signal peptide. Over 26–577 (QSPTPSPTGL…LHHSTSYNSK (552 aa)) the chain is Extracellular. Residues 28 to 163 (PTPSPTGLTT…TASTFPTDPV (136 aa)) are disordered. Polar residues-rich tracts occupy residues 52 to 61 (THTTAFSPAS) and 70 to 131 (SETT…SGSA). Residues Asn80, Asn92, Asn97, Asn186, Asn192, Asn199, Asn234, Asn262, Asn272, and Asn278 are each glycosylated (N-linked (GlcNAc...) asparagine). Asn286 carries N-linked (GlcNAc...) asparagine; atypical glycosylation. Asn337, Asn380, Asn421, Asn470, Asn490, and Asn531 each carry an N-linked (GlcNAc...) asparagine glycan. 2 Fibronectin type-III domains span residues 391–483 (SPGE…TKSA) and 484–576 (PPSQ…SYNS). The helical transmembrane segment at 578 to 598 (ALIAFLAFLIIVTSIALLVVL) threads the bilayer. The Cytoplasmic segment spans residues 599 to 1306 (YKIYDLHKKR…PASPALNQGS (708 aa)). 2 consecutive Tyrosine-protein phosphatase domains span residues 653–912 (FLAE…LVEY) and 944–1228 (LEAE…IAST). Phosphotyrosine is present on Tyr683. Residues Asp821, 853–859 (CSAGVGR), and Gln897 contribute to the substrate site. Cys853 (phosphocysteine intermediate) is an active-site residue. Phosphoserine occurs at positions 975, 994, 997, 1001, 1004, 1005, and 1009. The tract at residues 993-1014 (MSKESEHDSDESSDDDSDSEEP) is disordered. The span at 999–1012 (HDSDESSDDDSDSE) shows a compositional bias: acidic residues. Cys1169 (phosphocysteine intermediate) is an active-site residue. Positions 1261 to 1306 (CVNPLGAPEKLPEAKEQAEGSEPTSGTEGPEHSVNGPASPALNQGS) are disordered. Ser1299 is subject to Phosphoserine.

The protein belongs to the protein-tyrosine phosphatase family. Receptor class 1/6 subfamily. As to quaternary structure, binds GANAB and PRKCSH. Interacts with SKAP1. Interacts with DPP4; the interaction is enhanced in an interleukin-12-dependent manner in activated lymphocytes. Interacts with CD53; this interaction stabilizes PTPRC on the membrane and is required for optimal phosphatase activity. Interacts with CLEC10A. In terms of assembly, does not interact with CLEC10A. As to quaternary structure, (Microbial infection) Interacts with human cytomegalovirus protein UL11; the interaction is required for binding of UL11 to T-cells. Post-translationally, heavily N- and O-glycosylated. As to expression, isoform 1: Detected in thymocytes. Isoform 2: Detected in thymocytes. Isoform 3: Detected in thymocytes. Isoform 4: Not detected in thymocytes. Isoform 5: Detected in thymocytes. Isoform 6: Not detected in thymocytes. Isoform 7: Detected in thymocytes. Isoform 8: Not detected in thymocytes.

It is found in the cell membrane. It localises to the membrane raft. The protein localises to the synapse. It catalyses the reaction O-phospho-L-tyrosyl-[protein] + H2O = L-tyrosyl-[protein] + phosphate. In terms of biological role, protein tyrosine-protein phosphatase required for T-cell activation through the antigen receptor. Acts as a positive regulator of T-cell coactivation upon binding to DPP4. The first PTPase domain has enzymatic activity, while the second one seems to affect the substrate specificity of the first one. Upon T-cell activation, recruits and dephosphorylates SKAP1 and FYN. Dephosphorylates LYN, and thereby modulates LYN activity. Interacts with CLEC10A at antigen presenting cell-T cell contact; CLEC10A on immature dendritic cells recognizes Tn antigen-carrying PTPRC/CD45 receptor on effector T cells and modulates T cell activation threshold to limit autoreactivity. Functionally, (Microbial infection) Acts as a receptor for human cytomegalovirus protein UL11 and mediates binding of UL11 to T-cells, leading to reduced induction of tyrosine phosphorylation of multiple signaling proteins upon T-cell receptor stimulation and impaired T-cell proliferation. In Homo sapiens (Human), this protein is Receptor-type tyrosine-protein phosphatase C.